The following is a 201-amino-acid chain: Twin horsetail protein 2 (201 aa).

It is found in the nucleus. Required for correct meiotic chromosome segregation and recombination. The protein is Twin horsetail protein 2 (tht2) of Schizosaccharomyces pombe (strain 972 / ATCC 24843) (Fission yeast).